Here is a 597-residue protein sequence, read N- to C-terminus: Probable bifunctional ADP-ribose hydrolase/ADP-ribosyltransferase (597 aa).

The region spanning 99–299 is the Macro domain; that stretch reads SRLIKHGDLG…FYSKLLGPSH (201 aa). The ADP-D-ribose site is built by D118, I119, and N133. The Zn(2+) site is built by C139, H144, and C146. ADP-D-ribose is bound by residues C146, I147, D148, S244, T245, G246, and F248. In terms of domain architecture, Deacetylase sirtuin-type spans 307–597; sequence ENTPQGSLSL…IGRAIPLLLE (291 aa). NAD(+)-binding positions include A333, 418 to 421, and Q438; that span reads SNAD. Zn(2+) contacts are provided by C446, C450, C485, and C488. Position 584 (V584) interacts with NAD(+).

The protein in the N-terminal section; belongs to the MacroD-type family. Zn-Macro subfamily. This sequence in the C-terminal section; belongs to the sirtuin family. Class M subfamily. In terms of assembly, monomer. Zn(2+) serves as cofactor.

The catalysed reaction is 5-O-(ADP-D-ribosyl)-L-glutamyl-[protein] + H2O = L-glutamyl-[protein] + ADP-D-ribose + H(+). In terms of biological role, is probably a bifunctional enzyme with ADP-ribosyltransferase and ADP-ribosylhydrolase activities. In vitro, can act as an ADP-ribosylhydrolase that hydrolyzes ADP-ribosyl-glutamate bonds. It can remove the ADP-ribosyl modification from the human mono-ADP-ribosylated PARP1 E988Q mutant, which is primarily modified on glutamate site with only minor aspartate contribution. It cannot hydrolyze the ADP-ribosyl-arpartate bond in ribosylated S.pyogenes GcvH-L. The sequence is that of Probable bifunctional ADP-ribose hydrolase/ADP-ribosyltransferase from Fusarium oxysporum f. sp. cubense.